Here is an 89-residue protein sequence, read N- to C-terminus: DNA/RNA-binding protein Alba 1 (89 aa).

Belongs to the histone-like Alba family.

It localises to the cytoplasm. Its subcellular location is the chromosome. Functionally, binds double-stranded DNA tightly but without sequence specificity. Involved in DNA compaction. This is DNA/RNA-binding protein Alba 1 from Archaeoglobus fulgidus (strain ATCC 49558 / DSM 4304 / JCM 9628 / NBRC 100126 / VC-16).